The chain runs to 161 residues: Allophycocyanin alpha chain (161 aa).

Asn-71 is modified (N4-methylasparagine). Residue Cys-81 coordinates (2R,3E)-phycocyanobilin.

It belongs to the phycobiliprotein family. As to quaternary structure, heterodimer of an alpha and a beta chain. In terms of processing, contains one covalently linked phycocyanobilin chromophore.

It localises to the plastid. Its subcellular location is the chloroplast thylakoid membrane. Functionally, light-harvesting photosynthetic bile pigment-protein from the phycobiliprotein complex. Allophycocyanin has a maximum absorption at approximately 650 nanometers. This chain is Allophycocyanin alpha chain (apcA), found in Aglaothamnion neglectum (Red alga).